Consider the following 559-residue polypeptide: Tissue-type plasminogen activator (559 aa).

Positions 1–17 (MKGELLCVLLLCGVAFT) are cleaved as a signal peptide. Residues 18–29 (LPDQGIHRRFRR) constitute a propeptide that is removed on maturation. A propeptide spans 30 to 32 (GAR) (removed by plasmin). A Fibronectin type-I domain is found at 36–78 (ATCRDEQTQTTYQQHQSWLRPMLRGNRVEYCRCNSGLAQCHSV). 17 cysteine pairs are disulfide-bonded: C38–C68, C66–C75, C83–C94, C88–C105, C107–C116, C124–C205, C145–C187, C176–C200, C213–C294, C234–C276, C265–C289, C297–C428, C340–C356, C348–C417, C442–C516, C474–C490, and C506–C534. Residues 39–49 (RDEQTQTTYQQ) form an important for binding to annexin A2 region. In terms of domain architecture, EGF-like spans 79–117 (PVRSCSEPRCFNGGTCQQALYFSDFVCQCPDGFVGKRCD). 2 consecutive Kringle domains span residues 124–205 (CFEG…TPAC) and 213–294 (CYVG…MSPC). N-linked (GlcNAc...) asparagine glycosylation occurs at N149. Residues 309–558 (IKGGLFTDIT…YLNWIQDNMK (250 aa)) form the Peptidase S1 domain. Residues H355 and D404 each act as charge relay system in the active site. N-linked (GlcNAc...) asparagine glycosylation occurs at N481. S510 acts as the Charge relay system in catalysis.

Belongs to the peptidase S1 family. Heterodimer of chain A and chain B held by a disulfide bond. Binds to fibrin with high affinity. This interaction leads to an increase in the catalytic efficiency of the enzyme due to an increase in affinity for plasminogen. Similarly, binding to heparin increases the activation of plasminogen. Binds to annexin A2, cytokeratin-8, fibronectin and laminin. Binds to mannose receptor and the low-density lipoprotein receptor-related protein (LRP1); these proteins are involved in TPA clearance. Binds LRP1B; binding is followed by internalization and degradation. Forms heterodimer with SERPINA5. Interacts with SERPINE1. In complex with SERPINE1, interacts with SORL1. Post-translationally, the single chain, almost fully active enzyme, can be further processed into a two-chain fully active form by a cleavage after Arg-308 catalyzed by plasmin, tissue kallikrein or factor Xa.

It is found in the secreted. The protein resides in the extracellular space. The enzyme catalyses Specific cleavage of Arg-|-Val bond in plasminogen to form plasmin.. With respect to regulation, inhibited by SERPINA5. Inhibited by SERPINE1. In terms of biological role, converts the abundant, but inactive, zymogen plasminogen to plasmin by hydrolyzing a single Arg-Val bond in plasminogen. By controlling plasmin-mediated proteolysis, it plays an important role in tissue remodeling and degradation, in cell migration and many other physiopathological events. During oocyte activation, plays a role in cortical granule reaction in the zona reaction, which contributes to the block to polyspermy. The sequence is that of Tissue-type plasminogen activator (Plat) from Rattus norvegicus (Rat).